Consider the following 363-residue polypeptide: MVRSLVRRLLGRSQNNGTAAPALELPPEDSRARARAMVMGLQDEICAGLESLDGEGTFVEESWERPEGGGGRSRVMREGLVFEQGGVNFSEVQGQELPPSILKQRPEAKGHPWFATGTSMVLHPHNPYIPTVHLNYRYFEAGPVWWFGGGADLTPYYPFLEDARHFHRTHQAACDSVHPDLHKVFKPWCDEYFFLKHRGETRGVGGIFYDYQDSSGVLYKGQDPSGPAAGVSAQLGARPLGWEQLFALGQANGRAFLPSYAPIVEKRHPMAYGDRERQFQLYRRGRYVEFNLVWDRGTIFGLQTNGRTESILMSLPPLVRWEYGYKAEAGSREALLTELFTKPQDWLGDASLEDRCRPHGAIN.

Position 119 (serine 119) interacts with substrate. Residues histidine 123 and histidine 133 each coordinate a divalent metal cation. Residue histidine 133 is the Proton donor of the active site. Position 135–137 (135–137 (NYR)) interacts with substrate. Positions 167 and 197 each coordinate a divalent metal cation. The important for dimerization stretch occupies residues 287–322 (YVEFNLVWDRGTIFGLQTNGRTESILMSLPPLVRWE).

The protein belongs to the aerobic coproporphyrinogen-III oxidase family. Homodimer. A divalent metal cation serves as cofactor.

The protein resides in the cytoplasm. It catalyses the reaction coproporphyrinogen III + O2 + 2 H(+) = protoporphyrinogen IX + 2 CO2 + 2 H2O. Its pathway is porphyrin-containing compound metabolism; protoporphyrin-IX biosynthesis; protoporphyrinogen-IX from coproporphyrinogen-III (O2 route): step 1/1. Involved in the heme and chlorophyll biosynthesis. Catalyzes the aerobic oxidative decarboxylation of propionate groups of rings A and B of coproporphyrinogen-III to yield the vinyl groups in protoporphyrinogen-IX. The sequence is that of Oxygen-dependent coproporphyrinogen-III oxidase from Parasynechococcus marenigrum (strain WH8102).